Here is a 45-residue protein sequence, read N- to C-terminus: MAGSNCGCGSSCKCGDSCSCEKNYNKECDNCSCGSNCSCGSSCNC.

This sequence belongs to the metallothionein superfamily. Type 15 family. In terms of tissue distribution, widely expressed at low levels.

Functionally, metallothioneins have a high content of cysteine residues that bind various heavy metals. Confers tolerance to cadmium (Cd) and plays a role in Cd and zinc (Zn) homeostasis. The polypeptide is Metallothionein-like protein 1C (MT1C) (Arabidopsis thaliana (Mouse-ear cress)).